The primary structure comprises 100 residues: uncharacterized protein (100 aa).

Residues 1-86 form a disordered region; the sequence is MRGTRRGPSG…RHRPPEVTEP (86 aa). A compositionally biased stretch (pro residues) spans 35–48; it reads DTPPPRAPPPPPPL.

This is an uncharacterized protein from Human herpesvirus 6A (strain Uganda-1102) (HHV-6 variant A).